We begin with the raw amino-acid sequence, 283 residues long: Putative pyruvate, phosphate dikinase regulatory protein (283 aa).

154–161 lines the ADP pocket; sequence GVSRTSKT.

It belongs to the pyruvate, phosphate/water dikinase regulatory protein family. PDRP subfamily.

The catalysed reaction is N(tele)-phospho-L-histidyl/L-threonyl-[pyruvate, phosphate dikinase] + ADP = N(tele)-phospho-L-histidyl/O-phospho-L-threonyl-[pyruvate, phosphate dikinase] + AMP + H(+). It carries out the reaction N(tele)-phospho-L-histidyl/O-phospho-L-threonyl-[pyruvate, phosphate dikinase] + phosphate + H(+) = N(tele)-phospho-L-histidyl/L-threonyl-[pyruvate, phosphate dikinase] + diphosphate. Functionally, bifunctional serine/threonine kinase and phosphorylase involved in the regulation of the pyruvate, phosphate dikinase (PPDK) by catalyzing its phosphorylation/dephosphorylation. The protein is Putative pyruvate, phosphate dikinase regulatory protein of Afipia carboxidovorans (strain ATCC 49405 / DSM 1227 / KCTC 32145 / OM5) (Oligotropha carboxidovorans).